Consider the following 468-residue polypeptide: 55 kDa erythrocyte membrane protein (468 aa).

The 82-residue stretch at 73 to 154 (LVQFEKVTEE…MVSIKVIPNQ (82 aa)) folds into the PDZ domain. Positions 160–230 (ALQMFMRAQF…PSPELQEWRV (71 aa)) constitute an SH3 domain. The Guanylate kinase-like domain occupies 284 to 453 (RKTLVLIGAS…SLKLLEEAFE (170 aa)).

This sequence belongs to the MAGUK family.

It localises to the membrane. Its subcellular location is the cell projection. It is found in the stereocilium. May play a role in the regulation of neutrophil polarization. The polypeptide is 55 kDa erythrocyte membrane protein (MPP1) (Gallus gallus (Chicken)).